Here is an 808-residue protein sequence, read N- to C-terminus: TBC1 domain family member 10B (808 aa).

Disordered regions lie at residues 1 to 38, 60 to 225, and 237 to 264; these read METG…VVAP, PAWV…GTCE, and PEPA…GQAP. At serine 22 the chain carries Phosphoserine. The segment covering 27–38 has biased composition (low complexity); the sequence is GSRAGPVVVVAP. Residues 100–112 show a composition bias toward pro residues; the sequence is APKPQLPSGPESP. The residue at position 141 (serine 141) is a Phosphoserine. Positions 149–178 are enriched in low complexity; it reads PTGTPTRTPSRTAPGALTAKPPLAPKPGTT. Threonine 152 bears the Phosphothreonine mark. A compositionally biased stretch (polar residues) spans 179–189; sequence VASGVTARSAS. Arginine 186 is modified (omega-N-methylarginine). Low complexity predominate over residues 198–209; that stretch reads AAAATSASAGQA. Residues 242–252 are compositionally biased toward polar residues; sequence NSQDLGSTSSL. One can recognise a Rab-GAP TBC domain in the interval 360-548; it reads GIPSSLRAKA…RVWDMFFCEG (189 aa). The segment at 629–808 is disordered; sequence QYRPSRRLHG…SAEARQDAYF (180 aa). Low complexity predominate over residues 655–676; the sequence is PSSSLLSLPGLKSRGSRAAGGA. 4 positions are modified to phosphoserine: serine 658, serine 661, serine 678, and serine 687. A compositionally biased stretch (low complexity) spans 684-696; sequence RRASAGPAPGPVV. Residues 707–718 are compositionally biased toward polar residues; the sequence is SPTGNSTPLGSS. The stretch at 716 to 782 forms a coiled coil; it reads GSSKETRKQE…KAQGRKLSLR (67 aa). Basic and acidic residues-rich tracts occupy residues 719 to 774 and 793 to 808; these read KETR…EKKA and DGGD…DAYF.

The protein resides in the cytoplasm. The protein localises to the cell membrane. Its function is as follows. Acts as a GTPase-activating protein for RAB3A, RAB22A, RAB27A, and RAB35. Does not act on RAB2A and RAB6A. The sequence is that of TBC1 domain family member 10B (TBC1D10B) from Homo sapiens (Human).